A 727-amino-acid polypeptide reads, in one-letter code: Prolyl endopeptidase-like (727 aa).

Active-site charge relay system residues include Ser-559, Asp-645, and His-690.

The protein belongs to the peptidase S9A family. In terms of assembly, homodimer. Interacts with the AP-1 complex.

It localises to the cytoplasm. The protein localises to the cytosol. The protein resides in the golgi apparatus. Its subcellular location is the trans-Golgi network. It is found in the cytoskeleton. It localises to the nucleus. In terms of biological role, serine peptidase whose precise substrate specificity remains unclear. Does not cleave peptides after a arginine or lysine residue. Regulates trans-Golgi network morphology and sorting by regulating the membrane binding of the AP-1 complex. May play a role in the regulation of synaptic vesicle exocytosis. The chain is Prolyl endopeptidase-like (PREPL) from Pongo abelii (Sumatran orangutan).